Reading from the N-terminus, the 190-residue chain is Elongation factor P (190 aa).

Belongs to the elongation factor P family.

It is found in the cytoplasm. It participates in protein biosynthesis; polypeptide chain elongation. Functionally, involved in peptide bond synthesis. Stimulates efficient translation and peptide-bond synthesis on native or reconstituted 70S ribosomes in vitro. Probably functions indirectly by altering the affinity of the ribosome for aminoacyl-tRNA, thus increasing their reactivity as acceptors for peptidyl transferase. In Mycoplasma genitalium (strain ATCC 33530 / DSM 19775 / NCTC 10195 / G37) (Mycoplasmoides genitalium), this protein is Elongation factor P (efp).